A 1068-amino-acid chain; its full sequence is WD repeat-containing protein on Y chromosome (1068 aa).

WD repeat units follow at residues 155–199, 201–242, 322–361, 365–404, 455–494, 507–546, and 594–634; these read DEVT…IRTA, SESI…RGPF, RIPL…EPSA, GHNG…LLQT, THAA…RKII, IIDI…VVRN, and FHTD…RRYS. Residues 657-687 are disordered; that stretch reads SKRLASRPTPGNHGLQMGRAGRSTVLNRPED. 2 WD repeats span residues 746 to 785 and 829 to 868; these read KTGD…VPET and GHLK…LGTL. The segment at 1026–1068 is disordered; sequence SAINIKQPSRRRSDKTNDTRNVRTPRARDLIALEMSSSHASQS. Over residues 1039–1056 the composition is skewed to basic and acidic residues; the sequence is DKTNDTRNVRTPRARDLI.

This Drosophila yakuba (Fruit fly) protein is WD repeat-containing protein on Y chromosome.